A 432-amino-acid chain; its full sequence is UDP-N-acetylglucosamine 1-carboxyvinyltransferase (432 aa).

22 to 23 contributes to the phosphoenolpyruvate binding site; that stretch reads KN. R92 provides a ligand contact to UDP-N-acetyl-alpha-D-glucosamine. The Proton donor role is filled by C116. C116 bears the 2-(S-cysteinyl)pyruvic acid O-phosphothioketal mark. UDP-N-acetyl-alpha-D-glucosamine-binding positions include 121–125, D307, and I329; that span reads RPVDQ.

It belongs to the EPSP synthase family. MurA subfamily.

It is found in the cytoplasm. It catalyses the reaction phosphoenolpyruvate + UDP-N-acetyl-alpha-D-glucosamine = UDP-N-acetyl-3-O-(1-carboxyvinyl)-alpha-D-glucosamine + phosphate. Its pathway is cell wall biogenesis; peptidoglycan biosynthesis. Cell wall formation. Adds enolpyruvyl to UDP-N-acetylglucosamine. The protein is UDP-N-acetylglucosamine 1-carboxyvinyltransferase of Psychrobacter sp. (strain PRwf-1).